A 151-amino-acid polypeptide reads, in one-letter code: Ribosome maturation factor RimP (151 aa).

This sequence belongs to the RimP family.

It localises to the cytoplasm. In terms of biological role, required for maturation of 30S ribosomal subunits. The polypeptide is Ribosome maturation factor RimP (Shewanella oneidensis (strain ATCC 700550 / JCM 31522 / CIP 106686 / LMG 19005 / NCIMB 14063 / MR-1)).